The chain runs to 183 residues: UPF0397 protein stu0306/stu0307 (183 aa).

A run of 5 helical transmembrane segments spans residues A11–F31, V44–G64, G74–F94, I111–I131, and F149–I169.

Belongs to the UPF0397 family.

The protein localises to the cell membrane. This chain is UPF0397 protein stu0306/stu0307, found in Streptococcus thermophilus (strain ATCC BAA-250 / LMG 18311).